A 224-amino-acid chain; its full sequence is MYSQTKIAIPIFQAKKEDVIKVAEDCIEKGADVLEFRIDALDNPNFDDIKEIIEEINFPIIATNRISSEGGSFKGSEEERIDILLKCAPLVDYVDIELQSDDRYIKQIHDTGVTTIVSYHDFHKTPEINEIMYIVEKEQKLGDIAKVAFMPNDLDDTLKILAILSHCENTIAISMSDLGSYTRVMASKFDSPITFAAGRDVTAPGQIDIETMKSLLNMDLNLME.

Residues 35–37 (EFR) and R65 each bind 3-dehydroquinate. Catalysis depends on H120, which acts as the Proton donor/acceptor. K146 functions as the Schiff-base intermediate with substrate in the catalytic mechanism. R183, T202, and Q206 together coordinate 3-dehydroquinate.

This sequence belongs to the type-I 3-dehydroquinase family. Homodimer.

It carries out the reaction 3-dehydroquinate = 3-dehydroshikimate + H2O. The protein operates within metabolic intermediate biosynthesis; chorismate biosynthesis; chorismate from D-erythrose 4-phosphate and phosphoenolpyruvate: step 3/7. Involved in the third step of the chorismate pathway, which leads to the biosynthesis of aromatic amino acids. Catalyzes the cis-dehydration of 3-dehydroquinate (DHQ) and introduces the first double bond of the aromatic ring to yield 3-dehydroshikimate. This is 3-dehydroquinate dehydratase from Methanobrevibacter smithii (strain ATCC 35061 / DSM 861 / OCM 144 / PS).